Reading from the N-terminus, the 545-residue chain is CTP synthase (545 aa).

The tract at residues 1-265 (MNGIKHIFIT…DKFVIKHLDL (265 aa)) is amidoligase domain. Residue Ser-15 participates in CTP binding. A UTP-binding site is contributed by Ser-15. Residues 16-21 (SIGKGL) and Asp-73 contribute to the ATP site. The Mg(2+) site is built by Asp-73 and Glu-141. CTP-binding positions include 148 to 150 (DIE), 188 to 193 (KTKPTQ), and Lys-224. Residues 188–193 (KTKPTQ) and Lys-224 each bind UTP. The region spanning 290–534 (EIAIIGKYTG…VAAALARKEI (245 aa)) is the Glutamine amidotransferase type-1 domain. Position 349 (Gly-349) interacts with L-glutamine. Catalysis depends on Cys-376, which acts as the Nucleophile; for glutamine hydrolysis. Residues 377 to 380 (LGMQ), Glu-400, and Arg-460 each bind L-glutamine. Active-site residues include His-507 and Glu-509.

The protein belongs to the CTP synthase family. As to quaternary structure, homotetramer.

It carries out the reaction UTP + L-glutamine + ATP + H2O = CTP + L-glutamate + ADP + phosphate + 2 H(+). The catalysed reaction is L-glutamine + H2O = L-glutamate + NH4(+). The enzyme catalyses UTP + NH4(+) + ATP = CTP + ADP + phosphate + 2 H(+). It participates in pyrimidine metabolism; CTP biosynthesis via de novo pathway; CTP from UDP: step 2/2. With respect to regulation, allosterically activated by GTP, when glutamine is the substrate; GTP has no effect on the reaction when ammonia is the substrate. The allosteric effector GTP functions by stabilizing the protein conformation that binds the tetrahedral intermediate(s) formed during glutamine hydrolysis. Inhibited by the product CTP, via allosteric rather than competitive inhibition. Functionally, catalyzes the ATP-dependent amination of UTP to CTP with either L-glutamine or ammonia as the source of nitrogen. Regulates intracellular CTP levels through interactions with the four ribonucleotide triphosphates. This is CTP synthase from Tropheryma whipplei (strain TW08/27) (Whipple's bacillus).